A 172-amino-acid polypeptide reads, in one-letter code: uncharacterized protein (172 aa).

An N-acetyltransferase domain is found at 12–172 (IRLRCMEDRD…IAVYERKSYN (161 aa)).

This is an uncharacterized protein from Bacillus subtilis (strain 168).